The primary structure comprises 166 residues: Replication gene B protein (166 aa).

Required for lagging strand synthesis. Might interact with the host dnaB protein. In Escherichia phage P2 (Bacteriophage P2), this protein is Replication gene B protein (B).